The sequence spans 326 residues: Beta-ketoacyl-[acyl-carrier-protein] synthase III (326 aa).

Active-site residues include C116 and H253. Positions 254–258 (QANIR) are ACP-binding. N283 is a catalytic residue.

This sequence belongs to the thiolase-like superfamily. FabH family. In terms of assembly, homodimer.

It localises to the cytoplasm. The catalysed reaction is malonyl-[ACP] + acetyl-CoA + H(+) = 3-oxobutanoyl-[ACP] + CO2 + CoA. The protein operates within lipid metabolism; fatty acid biosynthesis. Its function is as follows. Catalyzes the condensation reaction of fatty acid synthesis by the addition to an acyl acceptor of two carbons from malonyl-ACP. Catalyzes the first condensation reaction which initiates fatty acid synthesis and may therefore play a role in governing the total rate of fatty acid production. Possesses both acetoacetyl-ACP synthase and acetyl transacylase activities. Its substrate specificity determines the biosynthesis of branched-chain and/or straight-chain of fatty acids. This is Beta-ketoacyl-[acyl-carrier-protein] synthase III from Jannaschia sp. (strain CCS1).